The primary structure comprises 462 residues: NEDD8-activating enzyme E1 catalytic subunit (462 aa).

At alanine 2 the chain carries N-acetylalanine. The interval histidine 53–cysteine 70 is interaction with UBE2M N-terminus. ATP is bound by residues aspartate 100 to lysine 124 and isoleucine 148 to alanine 171. 2 interaction with UBE2M N-terminus regions span residues arginine 157–isoleucine 161 and proline 192–methionine 217. An interaction with NEDD8 region spans residues leucine 227–proline 229. Residue cysteine 237 is the Glycyl thioester intermediate of the active site. Interaction with NAE1 stretches follow at residues methionine 242–histidine 248 and tyrosine 292–arginine 295. Residues isoleucine 331–proline 338 are interaction with UBE2M N-terminus. The tract at residues tyrosine 352–glutamate 357 is interaction with NEDD8. The segment at serine 368 to threonine 462 is interaction with UBE2M core domain.

The protein belongs to the ubiquitin-activating E1 family. UBA3 subfamily. Heterodimer of UBA3 and NAE1. Interacts with NEDD8, UBE2F and UBE2M. Binds ESR1 and ESR2 with bound steroid ligand. Interacts with TBATA.

The catalysed reaction is ATP + [NEDD8 protein] + [E1 NEDD8-activating enzyme]-L-cysteine = AMP + diphosphate + [E1 NEDD8-activating enzyme]-S-[NEDD8 protein]-yl-L-cysteine.. It participates in protein modification; protein neddylation. With respect to regulation, binding of TP53BP2 to the regulatory subunit NAE1 decreases activity. Catalytic subunit of the dimeric UBA3-NAE1 E1 enzyme. E1 activates NEDD8 by first adenylating its C-terminal glycine residue with ATP, thereafter linking this residue to the side chain of the catalytic cysteine, yielding a NEDD8-UBA3 thioester and free AMP. E1 finally transfers NEDD8 to the catalytic cysteine of UBE2M. Down-regulates steroid receptor activity. Necessary for cell cycle progression. The polypeptide is NEDD8-activating enzyme E1 catalytic subunit (Uba3) (Mus musculus (Mouse)).